Reading from the N-terminus, the 395-residue chain is Thyroid hormone receptor beta (395 aa).

Residues 1–31 (MSEQADKCNSRWKDEAMQNGYIPSYLDKDEL) are modulating. A DNA-binding region (nuclear receptor) is located at residues 29-106 (DELCVVCGDK…VGMATDLVLD (78 aa)). 8 residues coordinate Zn(2+): C32, C35, C49, C52, C70, C76, C86, and C89. 2 consecutive NR C4-type zinc fingers follow at residues 32–52 (CVVCGDKATGYHYRCITCEGC) and 70–89 (CKYEGKCVIDKVTRNQCQEC). Positions 142 to 395 (EEWEMIRVVT…PPLFLEVFED (254 aa)) constitute an NR LBD domain. The 3,3',5-triiodo-L-thyronine site is built by R216, N265, and H369.

This sequence belongs to the nuclear hormone receptor family. NR1 subfamily. In terms of assembly, interacts (via the ligand-binding domain) with ncoa2. As to expression, widely expressed in a range of adult tissues including the brain, eye, fin, gill, intestine, liver, swim bladder and ovary. In the eye, expressed in the outer nuclear layer of the retina.

It localises to the nucleus. In terms of biological role, nuclear hormone receptor that can act as a repressor or activator of transcription. High affinity receptor for the thyroid gland hormone triiodothyronine (T3). Transactivating activity is ligand-dependent, and is repressed in the absence of T3. The polypeptide is Thyroid hormone receptor beta (thrb) (Danio rerio (Zebrafish)).